Here is a 656-residue protein sequence, read N- to C-terminus: Receptor-type tyrosine-protein phosphatase R (656 aa).

The first 23 residues, 1 to 23 (MRRAVGFPALCLLLNLHAAGCFS), serve as a signal peptide directing secretion. O-linked (Xyl...) (chondroitin sulfate) serine glycosylation is present at serine 23. Residues 24-226 (RNNDHFLAIR…EADKIWSKEG (203 aa)) lie on the Extracellular side of the membrane. A glycan (N-linked (GlcNAc...) asparagine) is linked at asparagine 128. Residues 227-247 (FYAVVIFLSIFIIIVTCLMII) traverse the membrane as a helical segment. Residues 248-656 (YRLKERLQLS…ESRLSPETVE (409 aa)) lie on the Cytoplasmic side of the membrane. A disordered region spans residues 269–289 (HLSPIARQQAQSEAKTTHSMV). The residue at position 271 (serine 271) is a Phosphoserine. Residues 274–289 (ARQQAQSEAKTTHSMV) are compositionally biased toward polar residues. Residue serine 338 is modified to Phosphoserine; by PKA. The region spanning 392–646 (LQSEFMEIPM…EFVHHALCLF (255 aa)) is the Tyrosine-protein phosphatase domain. Substrate is bound by residues aspartate 553, 587-593 (CSAGIGR), and glutamine 631. Cysteine 587 (phosphocysteine intermediate) is an active-site residue.

The protein belongs to the protein-tyrosine phosphatase family. Receptor class 7 subfamily. As to quaternary structure, interacts with MAPKs. In terms of tissue distribution, expressed in the heart, brain, spleen, lung, liver, skeletal muscle, kidney and testis. Isoform alpha is expressed throughout the granular layer of the cerebellar but not within the Purkinje cells, also in the villi of the ileum and jejunum and both the villi and crypts of the duodenum. Isoform beta is expressed only in the Purkinje cells. Isoform gamma is expressed throughout the brain, the villi and crypts of the duodenum, jejunum and ileum and expressed at low levels in the proximal colon.

The protein localises to the cell membrane. It localises to the cytoplasm. The catalysed reaction is O-phospho-L-tyrosyl-[protein] + H2O = L-tyrosyl-[protein] + phosphate. In terms of biological role, sequesters mitogen-activated protein kinases (MAPKs) such as MAPK1, MAPK3 and MAPK14 in the cytoplasm in an inactive form. The MAPKs bind to a dephosphorylated kinase interacting motif, phosphorylation of which by the protein kinase A complex releases the MAPKs for activation and translocation into the nucleus. Isoform gamma may have a role in patterning and cellular proliferation of skeletal elements in the precartilaginous/cartilaginous skeleton. This is Receptor-type tyrosine-protein phosphatase R (Ptprr) from Mus musculus (Mouse).